An 80-amino-acid polypeptide reads, in one-letter code: Turripeptide VI/VII-01 (80 aa).

Positions 1–22 (MRLQLILTITLLLTSFMGYRDA) are cleaved as a signal peptide. Positions 23–36 (AVIQGKTERSAMKM) are excised as a propeptide. 3 disulfides stabilise this stretch: C48–C61, C50–C65, and C60–C70. A propeptide spanning residues 77–80 (SSAI) is cleaved from the precursor.

Expressed by the venom duct.

It localises to the secreted. The polypeptide is Turripeptide VI/VII-01 (Gemmula speciosa (Splendid gem-turris)).